The chain runs to 381 residues: Opsin-1 (381 aa).

Residues 1 to 53 (MASASLISEPSFSAYWGGSGGFANQTVVDKVPPEMLYLVDPHWYQFPPMNPLW) lie on the Extracellular side of the membrane. Asn-24 carries an N-linked (GlcNAc...) asparagine glycan. Residues 54–78 (HGLLGFVIGVLGVISVIGNGMVIYI) form a helical membrane-spanning segment. Over 79–90 (FSTTKSLRTPSN) the chain is Cytoplasmic. A helical membrane pass occupies residues 91 to 115 (LLVVNLAFSDFLMMFTMSAPMGINC). At 116–130 (YYETWVLGPFMCELY) the chain is on the extracellular side. A disulfide bridge connects residues Cys-127 and Cys-204. The helical transmembrane segment at 131–150 (ALFGSLFGCGSIWTMTMIAL) threads the bilayer. The Cytoplasmic segment spans residues 151 to 169 (DRYNVIVKGLSAKPMTNKT). Residues 170–193 (AMLRILFIWAFSVAWTIMPLFGWN) form a helical membrane-spanning segment. Residues 194–217 (RYVPEGNMTACGTDYLTKDWVSRS) are Extracellular-facing. Asn-200 is a glycosylation site (N-linked (GlcNAc...) asparagine). The helical transmembrane segment at 218-245 (YILVYSFFVYLLPLGTIIYSYFFILQAV) threads the bilayer. Topologically, residues 246-280 (SAHEKQMREQRKKMNVASLRSAEASQTSAECKLAK) are cytoplasmic. A helical membrane pass occupies residues 281–304 (VALMTISLWFFGWTPYLIINFTGI). Residues 305-311 (FETMKIS) are Extracellular-facing. A helical membrane pass occupies residues 312–336 (PLLTIWGSLFAKANAVFNPIVYGIS). N6-(retinylidene)lysine is present on Lys-323. Topologically, residues 337 to 381 (HPKYRAALEKKFPSLACASSSDDNTSVASGATTVSDEKSEKSASA) are cytoplasmic. Residues 354-370 (ASSSDDNTSVASGATTV) show a composition bias toward polar residues. The disordered stretch occupies residues 354-381 (ASSSDDNTSVASGATTVSDEKSEKSASA). A compositionally biased stretch (basic and acidic residues) spans 371-381 (SDEKSEKSASA).

The protein belongs to the G-protein coupled receptor 1 family. Opsin subfamily. Phosphorylated on some or all of the serine and threonine residues present in the C-terminal region.

The protein resides in the cell projection. It localises to the rhabdomere membrane. Visual pigments are the light-absorbing molecules that mediate vision. They consist of an apoprotein, opsin, covalently linked to cis-retinal. In Schistocerca gregaria (Desert locust), this protein is Opsin-1 (Lo1).